The chain runs to 562 residues: SPI-1 type 3 secretion system secretin (562 aa).

An N-terminal signal peptide occupies residues 1–24 (MKTHILLARVLACAALVLVTPGYS).

Belongs to the bacterial secretin family. T3SS SctC subfamily. In terms of assembly, the core secretion machinery of the T3SS is composed of approximately 20 different proteins, including cytoplasmic components, a base, an export apparatus and a needle. This subunit is part of the base, which anchors the injectisome in the bacterial cell envelope. Forms a stable homooligomeric complex. The complex is composed of 15 subunits.

Its subcellular location is the cell outer membrane. Its function is as follows. Component of the type III secretion system (T3SS), also called injectisome, which is used to inject bacterial effector proteins into eukaryotic host cells. Forms a ring-shaped multimeric structure with an apparent central pore in the outer membrane. The sequence is that of SPI-1 type 3 secretion system secretin from Salmonella typhimurium (strain LT2 / SGSC1412 / ATCC 700720).